A 597-amino-acid chain; its full sequence is Cysteine/serine-rich nuclear protein 3 (597 aa).

2 disordered regions span residues Glu-22–Ser-64 and Cys-348–Glu-407. The span at Ser-42–Val-52 shows a compositional bias: low complexity. The span at Asn-53 to Ser-64 shows a compositional bias: polar residues. The span at Cys-348–Gly-359 shows a compositional bias: acidic residues. Over residues Ser-361 to Pro-376 the composition is skewed to polar residues. Positions Glu-378–Lys-401 are enriched in acidic residues.

The protein belongs to the AXUD1 family. Detected only in the brain of 15 dpc, 18 dpc, newborn and P6 mice (at protein level).

It is found in the nucleus. Functionally, binds to the consensus sequence 5'-AGAGTG-3' and has transcriptional activator activity. Plays a role in apoptosis. In Mus musculus (Mouse), this protein is Cysteine/serine-rich nuclear protein 3 (Csrnp3).